Here is a 296-residue protein sequence, read N- to C-terminus: Cytidine deaminase (296 aa).

CMP/dCMP-type deaminase domains follow at residues 52-172 and 191-296; these read TAVE…FGPK and THAD…YFAL. A substrate-binding site is contributed by 93 to 95; that stretch reads NQE. Zn(2+) is bound at residue H106. E108 functions as the Proton donor in the catalytic mechanism. 2 residues coordinate Zn(2+): C133 and C136.

The protein belongs to the cytidine and deoxycytidylate deaminase family. Homodimer. Zn(2+) is required as a cofactor.

It catalyses the reaction cytidine + H2O + H(+) = uridine + NH4(+). It carries out the reaction 2'-deoxycytidine + H2O + H(+) = 2'-deoxyuridine + NH4(+). Functionally, this enzyme scavenges exogenous and endogenous cytidine and 2'-deoxycytidine for UMP synthesis. This Actinobacillus succinogenes (strain ATCC 55618 / DSM 22257 / CCUG 43843 / 130Z) protein is Cytidine deaminase.